A 123-amino-acid chain; its full sequence is Large ribosomal subunit protein uL14 (123 aa).

The protein belongs to the universal ribosomal protein uL14 family. In terms of assembly, part of the 50S ribosomal subunit. Forms a cluster with proteins L3 and L19. In the 70S ribosome, L14 and L19 interact and together make contacts with the 16S rRNA in bridges B5 and B8.

In terms of biological role, binds to 23S rRNA. Forms part of two intersubunit bridges in the 70S ribosome. This Proteus mirabilis (strain HI4320) protein is Large ribosomal subunit protein uL14.